The following is a 204-amino-acid chain: Holliday junction branch migration complex subunit RuvA (204 aa).

Residues 1-63 are domain I; sequence MIGWLQGRVL…EDGQFLYGFS (63 aa). The interval 64 to 142 is domain II; it reads SFLQRQLFRE…KNDLFLCDES (79 aa). The interval 143–152 is flexible linker; that stretch reads ESSRAPIALS. The segment at 152-204 is domain III; the sequence is SASEEAIQALIALELAPAEAELWVKKAQKTLAEDADSAALIKTAFALRLQGAK.

This sequence belongs to the RuvA family. In terms of assembly, homotetramer. Forms an RuvA(8)-RuvB(12)-Holliday junction (HJ) complex. HJ DNA is sandwiched between 2 RuvA tetramers; dsDNA enters through RuvA and exits via RuvB. An RuvB hexamer assembles on each DNA strand where it exits the tetramer. Each RuvB hexamer is contacted by two RuvA subunits (via domain III) on 2 adjacent RuvB subunits; this complex drives branch migration. In the full resolvosome a probable DNA-RuvA(4)-RuvB(12)-RuvC(2) complex forms which resolves the HJ.

Its subcellular location is the cytoplasm. Functionally, the RuvA-RuvB-RuvC complex processes Holliday junction (HJ) DNA during genetic recombination and DNA repair, while the RuvA-RuvB complex plays an important role in the rescue of blocked DNA replication forks via replication fork reversal (RFR). RuvA specifically binds to HJ cruciform DNA, conferring on it an open structure. The RuvB hexamer acts as an ATP-dependent pump, pulling dsDNA into and through the RuvAB complex. HJ branch migration allows RuvC to scan DNA until it finds its consensus sequence, where it cleaves and resolves the cruciform DNA. The protein is Holliday junction branch migration complex subunit RuvA of Dichelobacter nodosus (strain VCS1703A).